A 128-amino-acid polypeptide reads, in one-letter code: Large ribosomal subunit protein bL21 (128 aa).

The disordered stretch occupies residues 104-128 (GKKPSVGPRPKRVKAEPAPAADAAE). The span at 119–128 (EPAPAADAAE) shows a compositional bias: low complexity.

Belongs to the bacterial ribosomal protein bL21 family. In terms of assembly, part of the 50S ribosomal subunit. Contacts protein L20.

Its function is as follows. This protein binds to 23S rRNA in the presence of protein L20. This is Large ribosomal subunit protein bL21 from Rhodopseudomonas palustris (strain BisB5).